Here is a 541-residue protein sequence, read N- to C-terminus: MRLCTAGRLKQLQGGLVNKAIEIKKLGQLEVLKASVPYTQDPTRLFHTICENKTDSLLLESAEIDSKQNLKSLLIVDSAVRIVCYGHTVSFHALTENGKNLLTHVNQNVRGEVASQFDGETLTLEFIQPCDTIDEDSRLREASSFDALRLVQHSFDLSSQDKHAIFLGGLFAYDLVANFEPLGDAVATNQCPDYVFYVAETLLVVDHQTESCQLQATLFVDGSQKAALESRIEDIRAQCTSPKRLPDATQVANITAQPSVPDQDFCQIVRDLKEFVVKGDIFQVVPSRRFTLPCPSPLAAYKELKQSNPSPYMFYMQDELFTLFGASPESALKYETDTNQIEIYPIAGTRRRGKRPNGEIDFDLDSRIELELRSDKKENAEHMMLVDLARNDVARISQAGTRHVADLLKVDRYSHVMHLVSRVVGQLRDDLDALHAYQACMNMGTLTGAPKIRAMQLIRDVEGARRGSYGGAVGYLTGEGTLDTCIVIRSAYVENGIAQVQAGAGVVFDSDPQAEADETRGKAQAVISAIQAAHSQPANKE.

L-tryptophan contacts are provided by residues serine 61 and 311–313 (PYM). Chorismate is bound at residue 348-349 (GT). A Mg(2+)-binding site is contributed by glutamate 381. Chorismate-binding positions include tyrosine 469, arginine 489, 503–505 (GAG), and glycine 505. Glutamate 518 contacts Mg(2+).

It belongs to the anthranilate synthase component I family. In terms of assembly, heterotetramer consisting of two non-identical subunits: a beta subunit (TrpG) and a large alpha subunit (TrpE). Mg(2+) serves as cofactor.

The catalysed reaction is chorismate + L-glutamine = anthranilate + pyruvate + L-glutamate + H(+). The protein operates within amino-acid biosynthesis; L-tryptophan biosynthesis; L-tryptophan from chorismate: step 1/5. Its activity is regulated as follows. Feedback inhibited by tryptophan. Functionally, part of a heterotetrameric complex that catalyzes the two-step biosynthesis of anthranilate, an intermediate in the biosynthesis of L-tryptophan. In the first step, the glutamine-binding beta subunit (TrpG) of anthranilate synthase (AS) provides the glutamine amidotransferase activity which generates ammonia as a substrate that, along with chorismate, is used in the second step, catalyzed by the large alpha subunit of AS (TrpE) to produce anthranilate. In the absence of TrpG, TrpE can synthesize anthranilate directly from chorismate and high concentrations of ammonia. The chain is Anthranilate synthase component 1 (trpE) from Vibrio parahaemolyticus serotype O3:K6 (strain RIMD 2210633).